Consider the following 208-residue polypeptide: Outer-membrane lipoprotein LolB (208 aa).

Residues 1–17 (MIRRLLGVALLTGAITG) form the signal peptide. A lipid anchor (N-palmitoyl cysteine) is attached at cysteine 18. Residue cysteine 18 is the site of S-diacylglycerol cysteine attachment.

Belongs to the LolB family. As to quaternary structure, monomer.

The protein resides in the cell outer membrane. Plays a critical role in the incorporation of lipoproteins in the outer membrane after they are released by the LolA protein. In Marinobacter nauticus (strain ATCC 700491 / DSM 11845 / VT8) (Marinobacter aquaeolei), this protein is Outer-membrane lipoprotein LolB.